A 165-amino-acid chain; its full sequence is Transcription antitermination protein NusB (165 aa).

The tract at residues 1–27 (MISDDTDQFNPRDAKSPEAAKGKSAKR) is disordered. Positions 10–21 (NPRDAKSPEAAK) are enriched in basic and acidic residues.

Belongs to the NusB family.

Its function is as follows. Involved in transcription antitermination. Required for transcription of ribosomal RNA (rRNA) genes. Binds specifically to the boxA antiterminator sequence of the ribosomal RNA (rrn) operons. In Pseudomonas savastanoi pv. phaseolicola (strain 1448A / Race 6) (Pseudomonas syringae pv. phaseolicola (strain 1448A / Race 6)), this protein is Transcription antitermination protein NusB.